The primary structure comprises 411 residues: Kelch domain-containing protein 10 (411 aa).

Kelch repeat units lie at residues 72 to 133 (NLYV…LHGH), 135 to 186 (LLVF…IIHG), 187 to 239 (FLYV…HDGQ), 240 to 288 (RIYV…RRCH), 296 to 342 (EVFI…AVTP), and 345 to 388 (CMYI…YFPH).

The protein belongs to the KLHDC10 family. In terms of assembly, component of a CRL2 E3 ubiquitin-protein ligase complex, also named ECS (Elongin BC-CUL2/5-SOCS-box protein) complex, composed of CUL2, Elongin BC (ELOB and ELOC), RBX1 and substrate-specific adapter KLHDC10.

It participates in protein modification; protein ubiquitination. Substrate-recognition component of a Cul2-RING (CRL2) E3 ubiquitin-protein ligase complex of the DesCEND (destruction via C-end degrons) pathway, which recognizes a C-degron located at the extreme C terminus of target proteins, leading to their ubiquitination and degradation. The C-degron recognized by the DesCEND pathway is usually a motif of less than ten residues and can be present in full-length proteins, truncated proteins or proteolytically cleaved forms. The CRL2(KLHDC10) complex specifically recognizes proteins with a proline-glycine (Pro-Gly) or an alanine tail (CAT tail) at the C-terminus, leading to their ubiquitination and degradation. The CRL2(KLHDC10) complex is involved in the ribosome-associated quality control (RQC) pathway, which mediates the extraction of incompletely synthesized nascent chains from stalled ribosomes: CRL2(KLHDC10) acts downstream of NEMF and recognizes CAT tails associated with stalled nascent chains, leading to their ubiquitination and degradation. The chain is Kelch domain-containing protein 10 from Xenopus tropicalis (Western clawed frog).